The sequence spans 291 residues: 4-hydroxy-tetrahydrodipicolinate synthase (291 aa).

Threonine 45 contributes to the pyruvate binding site. Residue tyrosine 133 is the Proton donor/acceptor of the active site. Residue lysine 161 is the Schiff-base intermediate with substrate of the active site. Isoleucine 203 provides a ligand contact to pyruvate.

The protein belongs to the DapA family. As to quaternary structure, homotetramer; dimer of dimers.

It localises to the cytoplasm. The enzyme catalyses L-aspartate 4-semialdehyde + pyruvate = (2S,4S)-4-hydroxy-2,3,4,5-tetrahydrodipicolinate + H2O + H(+). The protein operates within amino-acid biosynthesis; L-lysine biosynthesis via DAP pathway; (S)-tetrahydrodipicolinate from L-aspartate: step 3/4. In terms of biological role, catalyzes the condensation of (S)-aspartate-beta-semialdehyde [(S)-ASA] and pyruvate to 4-hydroxy-tetrahydrodipicolinate (HTPA). This chain is 4-hydroxy-tetrahydrodipicolinate synthase, found in Saccharophagus degradans (strain 2-40 / ATCC 43961 / DSM 17024).